The chain runs to 345 residues: Growth arrest-specific protein 1 (345 aa).

The N-terminal stretch at 1 to 39 (MVAALLGGGGEARGGTVPGAWLCLMALLQLLGSAPRGSG) is a signal peptide. N-linked (GlcNAc...) asparagine glycosylation occurs at N117. Residues 254-328 (SSGSDGGLDD…GGGGRLAPRG (75 aa)) form a disordered region. A compositionally biased stretch (acidic residues) spans 260 to 271 (GLDDYYDEDYDD). The GPI-anchor amidated serine moiety is linked to residue S318. Residues 319-345 (GGGGRLAPRGAWTPLASILLLLLGPLF) constitute a propeptide, removed in mature form.

Its subcellular location is the cell membrane. Its function is as follows. Specific growth arrest protein involved in growth suppression. Blocks entry to S phase. Prevents cycling of normal and transformed cells. Binds 20(S)-hydroxycholesterol (20(S)-OHC). The chain is Growth arrest-specific protein 1 (GAS1) from Homo sapiens (Human).